The following is a 592-amino-acid chain: Elongation factor 1 alpha-like protein (592 aa).

Disordered regions lie at residues 1 to 35 and 78 to 159; these read MSRHRDVKNLDLDDYELDEEPGEEELTEEQEEEFR and SSKA…KQNP. The span at 12–32 shows a compositional bias: acidic residues; sequence LDDYELDEEPGEEELTEEQEE. Residues 82–111 are compositionally biased toward basic and acidic residues; that stretch reads GAKEKQNTDSQKEKKQNKSKEALADAKDPL. Residues 113–124 are compositionally biased toward polar residues; the sequence is ESSNGIKNLSLN. Basic and acidic residues predominate over residues 137–151; sequence VKMKNSSESDNQPEK. One can recognise a tr-type G domain in the interval 175 to 401; that stretch reads KPVVHLVVTG…DQLVPPEKPY (227 aa). The tract at residues 184–191 is G1; sequence GHVDSGKS. 184 to 191 contacts GTP; sequence GHVDSGKS. The tract at residues 240–244 is G2; it reads GVTMD. Residues 261–264 form a G3 region; sequence DAPG. GTP-binding positions include 323-326 and 352-355; these read NKLD and FKTS. The interval 323–326 is G4; it reads NKLD. A G5 region spans residues 363-365; it reads SAI.

The protein belongs to the TRAFAC class translation factor GTPase superfamily. Classic translation factor GTPase family. As to quaternary structure, component of the Dom34-Hbs1 complex, also named Pelota-HBS1L complex, composed of dom34 and hbs1.

The protein resides in the cytoplasm. The enzyme catalyses GTP + H2O = GDP + phosphate + H(+). In terms of biological role, GTPase component of the Dom34-Hbs1 complex, a complex that recognizes stalled ribosomes and triggers the No-Go Decay (NGD) pathway. The Dom34-Hbs1 complex recognizes ribosomes stalled at the 3' end of an mRNA and engages stalled ribosomes by destabilizing mRNA in the mRNA channel. Following ribosome-binding, the Pelota-HBS1L complex promotes the disassembly of stalled ribosomes, followed by degradation of damaged mRNAs as part of the NGD pathway. This Schizosaccharomyces pombe (strain 972 / ATCC 24843) (Fission yeast) protein is Elongation factor 1 alpha-like protein.